A 5085-amino-acid polypeptide reads, in one-letter code: Linear gramicidin synthase subunit D (5085 aa).

4 consecutive Carrier domains span residues 962–1037 (APRT…AAAG), 2023–2097 (SPST…EEKA), 3544–3619 (APRN…ELLT), and 4601–4676 (APQT…EEII). 4 positions are modified to O-(pantetheine 4'-phosphoryl)serine: Ser-997, Ser-2058, Ser-3579, and Ser-4636.

Belongs to the ATP-dependent AMP-binding enzyme family. As to quaternary structure, large multienzyme complex composed of 4 subunits; LgrA, LgrB, LgrC and LgrD. Pantetheine 4'-phosphate is required as a cofactor.

Functionally, activates the 13th to the 16th (Trp, D-Leu, Trp and Gly) amino acids in linear gramicidin and catalyzes the formation of the peptide bond between them. This enzyme is also responsible for the epimerization of the 14th (D-Leu) amino acid. It also catalyzes the NAD(P)H-dependent reduction of the C-terminal glycine residue of the N-formylated 16-mer peptide, that binds to the peptidyl carrier domain of the terminal module of this protein, to form a peptidyl-aldehyde intermediate that is released from the enzyme complex. This is Linear gramicidin synthase subunit D (lgrD) from Brevibacillus parabrevis.